Consider the following 781-residue polypeptide: Catenin beta-1 (781 aa).

A2 carries the post-translational modification N-acetylalanine. The tract at residues 2–23 (ATQADLMELDMAMEPDRKAAVS) is interaction with VCL. S23 is subject to Phosphoserine; by GSK3-beta; alternate. The O-linked (GlcNAc) serine; alternate glycan is linked to S23. Phosphoserine; by GSK3-beta is present on S29. Residues S33 and S37 each carry the phosphoserine; by GSK3-beta and HIPK2 modification. The tract at residues 34-57 (GIHSGATTTAPSLSGKGNPEEEDV) is disordered. T41 is modified (phosphothreonine; by GSK3-beta). S45 carries the post-translational modification Phosphoserine. N6-acetyllysine is present on K49. Y64 is subject to Phosphotyrosine; by PTK6. At Y142 the chain carries Phosphotyrosine; by FYN and PTK6. 12 ARM repeats span residues 151 to 191 (RAIP…IMRS), 193 to 234 (QMVS…IFKS), 235 to 276 (GGIP…VRLA), 277 to 318 (GGLQ…ILAS), 319 to 360 (GGPQ…IVEA), 361 to 389 (GGMQ…RNLS), 400 to 441 (GLLG…VCQV), 442 to 484 (GGIE…AQNA), 489 to 530 (YGLP…LREQ), 531 to 571 (GAIP…EIVE), 594 to 636 (NTIP…AEGA), and 637 to 666 (TAPL…SEDK). Positions 156–178 (LTKLLNDEDQVVVNKAAVMVHQL) are interaction with BCL9. S191 is subject to Phosphoserine. Residue S246 is modified to Phosphoserine; by CDK5. Y331 and Y333 each carry phosphotyrosine. Residue S552 is modified to Phosphoserine. Residue T556 is modified to Phosphothreonine. Position 619 is an S-nitrosocysteine (C619). Residue S675 is modified to Phosphoserine. Residues 720-781 (HSGGYGQDAL…NQLAWFDTDL (62 aa)) are disordered. Over residues 734–745 (MMEHEMGGHHPG) the composition is skewed to basic and acidic residues. The interaction with SCRIB stretch occupies residues 772-781 (NQLAWFDTDL).

Belongs to the beta-catenin family. In terms of assembly, two separate complex-associated pools are found in the cytoplasm. The majority is present as component of an E-cadherin/ catenin adhesion complex composed of at least E-cadherin/CDH1 and beta-catenin/CTNNB1, and possibly alpha-catenin/CTNNA1; the complex is located to adherens junctions. The stable association of CTNNA1 is controversial as CTNNA1 was shown not to bind to F-actin when assembled in the complex. Alternatively, the CTNNA1-containing complex may be linked to F-actin by other proteins such as LIMA1. Another cytoplasmic pool is part of a large complex containing AXIN1, AXIN2, APC, CSNK1A1 and GSK3B that promotes phosphorylation on N-terminal Ser and Thr residues and ubiquitination of CTNNB1. Interacts directly with AXIN1; the interaction is regulated by CK2 via BTRC and its subsequent degradation by the proteasome. Interacts directly with AXIN1; the interaction is regulated by CDK2 phosphorylation. Wnt-dependent activation of DVL antagonizes the action of GSK3B. When GSK3B activity is inhibited the complex dissociates, CTNNB1 is dephosphorylated and is no longer targeted for destruction. The stabilized protein translocates to the nucleus, where it binds TCF/LEF-1 family members, BCL9, BCL9L and possibly also RUVBL1 and CHD8. Binds CTNNBIP and EP300. CTNNB1 forms a ternary complex with LEF1 and EP300 that is disrupted by CTNNBIP1 binding. Interacts with TAX1BP3 (via the PDZ domain); this interaction inhibits the transcriptional activity of CTNNB1. Interacts with AJAP1, BAIAP1, CARM1, CTNNA3, CXADR and PCDH11Y. Binds NHERF1. Interacts with GLIS2. Interacts with XIRP1. Interacts with PTPRU (via the cytoplasmic juxtamembrane domain) and with SLC30A9. Interacts with EMD. Interacts with SCRIB. Interacts with TNIK and TCF7L2. Interacts with SESTD1 and TRPC4. Interacts directly with AXIN1; the interaction is regulated by CDK2 phosphorylation of AXIN1. Interacts with CAV1. Interacts with TRPV4. The TRPV4 and CTNNB1 complex can interact with CDH1. Interacts with VCL. Interacts with PTPRJ. Interacts with PKT7. Interacts with NANOS1. Interacts with CDK2, NDRG2, NEK2 and CDK5. Found in a complex composed of MACF1, APC, AXIN1, CTNNB1 and GSK3B. Interacts with PTK6. Interacts with SOX7; this interaction may lead to proteasomal degradation of active CTNNB1 and thus inhibition of Wnt/beta-catenin-stimulated transcription. Identified in a complex with HINT1 and MITF. Interacts with FHIT. The CTNNB1 and TCF4 complex interacts with PML. Interacts with FERMT2. Identified in a complex with TCF4 and FERMT2. Interacts with RAPGEF2. Interacts with FAT1 (via the cytoplasmic domain). Interacts with RORA. May interact with P-cadherin/CDH3. Interacts with RNF220. Interacts with CTNND2. Interacts (via the C-terminal region) with CBY1. The complex composed, at least, of APC, CTNNB1 and GSK3B interacts with JPT1; the interaction requires the inactive form of GSK3B (phosphorylated at 'Ser-9'). Interacts with DLG5. Interacts with FAM53B; promoting translocation to the nucleus. Interacts with TMEM170B. Interacts with AHI1. Interacts with GID8. Component of an cadherin:catenin adhesion complex composed of at least of CDH26, beta-catenin/CTNNB1, alpha-catenin/CTNNA1 and p120 catenin/CTNND1. Forms a complex comprising APPL1, RUVBL2, APPL2, HDAC1 and HDAC2. Interacts with IRF2BPL; mediates the ubiquitination and degradation of CTNNB1. Interacts with AMFR. Interacts with LMBR1L. Interacts with SOX30; prevents interaction of CTNNB1 with TCF7L2/TCF4 and leads to inhibition of Wnt signaling. Interacts with SOX9; inhibiting CTNNB1 activity by competing with the binding sites of TCF/LEF within CTNNB1, thereby inhibiting the Wnt signaling. Interacts with SPN/CD43 cytoplasmic tail. Interacts (when phosphorylated at Tyr-333) with isoform M2 of PKM (PKM2); promoting transcription activation. Interacts with PKP2 (via HEAD domain). Interacts with CDH1. Interacts (when unphosphorylated) with FLYWCH1, perhaps preventing interaction of CTNNB1 with TCF4, and thereby regulating transcription activation; phosphorylation of CTNNB1 may inhibit the interaction. Interacts (via the central armadillo domains) with probable transcriptional regulator ADNP (via N-terminal region); interaction is direct and stabilizes CTNNB1 by modulating its phosphorylation by glycogen synthase kinase-3 beta GSK3B. Interacts with NR5A2. Interacts with DSG2; the interaction promotes localization of CTNNB1 at cell junctions thus reducing its nuclear localization and subsequent transcription of CTNNB1/TCF-target genes. Post-translationally, phosphorylation by GSK3B requires prior phosphorylation of Ser-45 by another kinase. Phosphorylation proceeds then from Thr-41 to Ser-33. Phosphorylated by NEK2. EGF stimulates tyrosine phosphorylation. Phosphorylated on Ser-33 and Ser-37 by HIPK2. This phosphorylation triggers proteasomal degradation. Phosphorylation at Ser-552 by AMPK promotes stabilization of the protein, enhancing TCF/LEF-mediated transcription. Phosphorylation on Ser-191 and Ser-246 by CDK5. Phosphorylation by CDK2 regulates insulin internalization. Phosphorylation by PTK6 at Tyr-64, Tyr-142, Tyr-331 and/or Tyr-333 with the predominant site at Tyr-64 is not essential for inhibition of transcriptional activity. Phosphorylation by SRC at Tyr-333 promotes interaction with isoform M2 of PKM (PKM2); promoting transcription activation. Ubiquitinated by the SCF(BTRC) E3 ligase complex when phosphorylated by GSK3B, leading to its degradation. Ubiquitinated by a E3 ubiquitin ligase complex containing UBE2D1, SIAH1, CACYBP/SIP, SKP1, APC and TBL1X, leading to its subsequent proteasomal degradation. Ubiquitinated and degraded following interaction with SOX9. Ubiquitinated via 'Lys-11'- and 'Lys-29'-linked ubiquitin chains by UBR5, leading to its stabilization. In terms of processing, S-nitrosylation at Cys-619 within adherens junctions promotes VEGF-induced, NO-dependent endothelial cell permeability by disrupting interaction with E-cadherin, thus mediating disassembly adherens junctions. Post-translationally, O-glycosylation at Ser-23 decreases nuclear localization and transcriptional activity, and increases localization to the plasma membrane and interaction with E-cadherin CDH1. Deacetylated at Lys-49 by SIRT1. Expressed in the testis.

Its subcellular location is the cytoplasm. The protein localises to the nucleus. It is found in the cytoskeleton. The protein resides in the cell junction. It localises to the adherens junction. Its subcellular location is the cell membrane. The protein localises to the microtubule organizing center. It is found in the centrosome. The protein resides in the spindle pole. It localises to the synapse. Its subcellular location is the cilium basal body. Its function is as follows. Key downstream component of the canonical Wnt signaling pathway. In the absence of Wnt, forms a complex with AXIN1, AXIN2, APC, CSNK1A1 and GSK3B that promotes phosphorylation on N-terminal Ser and Thr residues and ubiquitination of CTNNB1 via BTRC and its subsequent degradation by the proteasome. In the presence of Wnt ligand, CTNNB1 is not ubiquitinated and accumulates in the nucleus, where it acts as a coactivator for transcription factors of the TCF/LEF family, leading to activate Wnt responsive genes. Also acts as a coactivator for other transcription factors, such as NR5A2. Promotes epithelial to mesenchymal transition/mesenchymal to epithelial transition (EMT/MET) via driving transcription of CTNNB1/TCF-target genes. Involved in the regulation of cell adhesion, as component of an E-cadherin:catenin adhesion complex. Acts as a negative regulator of centrosome cohesion. Involved in the CDK2/PTPN6/CTNNB1/CEACAM1 pathway of insulin internalization. Blocks anoikis of malignant kidney and intestinal epithelial cells and promotes their anchorage-independent growth by down-regulating DAPK2. Disrupts PML function and PML-NB formation by inhibiting RANBP2-mediated sumoylation of PML. Promotes neurogenesis by maintaining sympathetic neuroblasts within the cell cycle. Involved in chondrocyte differentiation via interaction with SOX9: SOX9-binding competes with the binding sites of TCF/LEF within CTNNB1, thereby inhibiting the Wnt signaling. Acts as a positive regulator of odontoblast differentiation during mesenchymal tooth germ formation, via promoting the transcription of differentiation factors such as LEF1, BMP2 and BMP4. Activity is repressed in a MSX1-mediated manner at the bell stage of mesenchymal tooth germ formation which prevents premature differentiation of odontoblasts. This chain is Catenin beta-1, found in Rattus norvegicus (Rat).